Reading from the N-terminus, the 468-residue chain is ATP synthase subunit beta 2 (468 aa).

Residue 155 to 162 participates in ATP binding; that stretch reads GGAGVGKT.

Belongs to the ATPase alpha/beta chains family. As to quaternary structure, F-type ATPases have 2 components, CF(1) - the catalytic core - and CF(0) - the membrane proton channel. CF(1) has five subunits: alpha(3), beta(3), gamma(1), delta(1), epsilon(1). CF(0) has four main subunits: a(1), b(1), b'(1) and c(9-12).

Its subcellular location is the cell inner membrane. It catalyses the reaction ATP + H2O + 4 H(+)(in) = ADP + phosphate + 5 H(+)(out). Produces ATP from ADP in the presence of a proton gradient across the membrane. The catalytic sites are hosted primarily by the beta subunits. This chain is ATP synthase subunit beta 2, found in Chlorobium luteolum (strain DSM 273 / BCRC 81028 / 2530) (Pelodictyon luteolum).